A 179-amino-acid polypeptide reads, in one-letter code: Large ribosomal subunit protein uL6 (179 aa).

It belongs to the universal ribosomal protein uL6 family. Part of the 50S ribosomal subunit.

Functionally, this protein binds to the 23S rRNA, and is important in its secondary structure. It is located near the subunit interface in the base of the L7/L12 stalk, and near the tRNA binding site of the peptidyltransferase center. This Koribacter versatilis (strain Ellin345) protein is Large ribosomal subunit protein uL6.